The chain runs to 340 residues: Immunoglobulin-binding protein 1 family member C (340 aa).

Disordered regions lie at residues 223-243 (KDSS…PPMK) and 292-340 (PEEF…QNMG). Residues 303 to 314 (EDQEKEEEDDEQ) are compositionally biased toward acidic residues. Residues 318–330 (RAREWDDWKDTHP) show a composition bias toward basic and acidic residues.

It belongs to the IGBP1/TAP42 family.

The polypeptide is Immunoglobulin-binding protein 1 family member C (Homo sapiens (Human)).